The following is an 85-amino-acid chain: Large ribosomal subunit protein bL27 (85 aa).

A disordered region spans residues 1–24; it reads MAHKKGQGSSRNGRDSNAQRRGVK.

This sequence belongs to the bacterial ribosomal protein bL27 family.

In Syntrophus aciditrophicus (strain SB), this protein is Large ribosomal subunit protein bL27.